We begin with the raw amino-acid sequence, 100 residues long: Large ribosomal subunit protein bL21 (100 aa).

The protein belongs to the bacterial ribosomal protein bL21 family. In terms of assembly, part of the 50S ribosomal subunit. Contacts protein L20.

Its function is as follows. This protein binds to 23S rRNA in the presence of protein L20. The chain is Large ribosomal subunit protein bL21 from Wolbachia sp. subsp. Brugia malayi (strain TRS).